A 114-amino-acid chain; its full sequence is Ig kappa chain V-I region S107A (114 aa).

The interval 1-23 (DIVMTQSPTFLAVTASKKVTISC) is framework-1. An intrachain disulfide couples C23 to C94. Positions 24–40 (TASESLYSSKHKVHYLA) are complementarity-determining-1. The tract at residues 41 to 55 (WYQKKPEQSPKLLIY) is framework-2. A complementarity-determining-2 region spans residues 56-62 (GASNRYI). Residues 63–94 (GVPDRFTGSGSGTDFTLTISSVQVEDLTHYYC) form a framework-3 region. The tract at residues 95-103 (AQFYSYPLT) is complementarity-determining-3. A framework-4 region spans residues 104–113 (FGAGTKLELK).

Anti-phosphocholine antibody. The chain is Ig kappa chain V-I region S107A (Igkv7-33) from Mus musculus (Mouse).